The sequence spans 177 residues: ATP synthase subunit delta (177 aa).

It belongs to the ATPase delta chain family. In terms of assembly, F-type ATPases have 2 components, F(1) - the catalytic core - and F(0) - the membrane proton channel. F(1) has five subunits: alpha(3), beta(3), gamma(1), delta(1), epsilon(1). F(0) has three main subunits: a(1), b(2) and c(10-14). The alpha and beta chains form an alternating ring which encloses part of the gamma chain. F(1) is attached to F(0) by a central stalk formed by the gamma and epsilon chains, while a peripheral stalk is formed by the delta and b chains.

It is found in the cell inner membrane. F(1)F(0) ATP synthase produces ATP from ADP in the presence of a proton or sodium gradient. F-type ATPases consist of two structural domains, F(1) containing the extramembraneous catalytic core and F(0) containing the membrane proton channel, linked together by a central stalk and a peripheral stalk. During catalysis, ATP synthesis in the catalytic domain of F(1) is coupled via a rotary mechanism of the central stalk subunits to proton translocation. Its function is as follows. This protein is part of the stalk that links CF(0) to CF(1). It either transmits conformational changes from CF(0) to CF(1) or is implicated in proton conduction. The polypeptide is ATP synthase subunit delta (Azobacteroides pseudotrichonymphae genomovar. CFP2).